A 2967-amino-acid polypeptide reads, in one-letter code: BEACH domain-containing protein lvsD (2967 aa).

10 disordered regions span residues 1 to 25 (MSSPLKFPFKQQQQQQQQQRSRIGG), 322 to 364 (NNNN…SSNS), 588 to 615 (ILSIDPNNNNNNNNNNNNNIQQPQQQQL), 917 to 936 (NNSNNNNNNNNSNSNNNNIN), 1077 to 1105 (GGSNNNNNNNNNNSNNNKDKIDSNNKDKD), 1173 to 1220 (NTSS…SDHR), 1583 to 1613 (NNNSGNNNSGNNINNNNNNNNNNTNLNNNEN), 1831 to 1859 (QQQQQQSQQSLQLPPSPSISNAGSSSSVV), 1921 to 2009 (PQKT…TLNN), and 2029 to 2062 (KSTLTSSSSSSPSSNNNNGNSNNNSNNNNNNNKN). The region spanning 229 to 491 (MTFRKAPSSV…QDLFRKGSNY (263 aa)) is the BEACH 1 domain. Over residues 1079-1092 (SNNNNNNNNNNSNN) the composition is skewed to low complexity. Residues 1093 to 1105 (NKDKIDSNNKDKD) show a composition bias toward basic and acidic residues. 6 stretches are compositionally biased toward low complexity: residues 1185-1194 (PLLTSTKSMS), 1583-1611 (NNNSGNNNSGNNINNNNNNNNNNTNLNNN), 1831-1857 (QQQQQQSQQSLQLPPSPSISNAGSSSS), 1926-1980 (QNQH…SFSN), 1993-2006 (NIITTTTTTTTTST), and 2034-2062 (SSSSSSPSSNNNNGNSNNNSNNNNNNNKN). Positions 2060–2162 (NKNIKLEFST…ICAQILKLIG (103 aa)) constitute a BEACH-type PH domain. BEACH domains lie at 2202–2492 (TPQQ…HPQR) and 2628–2785 (NSRV…IYSN). WD repeat units lie at residues 2658 to 2710 (NHKS…SDHH) and 2720 to 2761 (GHNF…KSIQ). Disordered stretches follow at residues 2798–2820 (SATTTTTTRDDESSSSSLSSSNT) and 2915–2934 (PSTSVSGDSNSNNNNNNNGN). Low complexity-rich tracts occupy residues 2811–2820 (SSSSLSSSNT) and 2924–2934 (NSNNNNNNNGN).

This Dictyostelium discoideum (Social amoeba) protein is BEACH domain-containing protein lvsD (lvsD).